The sequence spans 219 residues: uncharacterized protein (219 aa).

Positions 139–154 (PRKIKQKKKTKKKRPS) are enriched in basic residues. Positions 139 to 160 (PRKIKQKKKTKKKRPSKSAPKT) are disordered. In terms of domain architecture, LysM spans 159-217 (KTYTVKKGDTLWDLAGKFYGDSTKWRKIWKVNKKAMIKRSKRNIRQPGHWIFPGQKLKI).

This is an uncharacterized protein from Bacillus subtilis (strain 168).